Reading from the N-terminus, the 118-residue chain is Large ribosomal subunit protein bL20 (118 aa).

Belongs to the bacterial ribosomal protein bL20 family.

In terms of biological role, binds directly to 23S ribosomal RNA and is necessary for the in vitro assembly process of the 50S ribosomal subunit. It is not involved in the protein synthesizing functions of that subunit. The protein is Large ribosomal subunit protein bL20 of Agathobacter rectalis (strain ATCC 33656 / DSM 3377 / JCM 17463 / KCTC 5835 / VPI 0990) (Eubacterium rectale).